The primary structure comprises 188 residues: Acireductone dioxygenase (188 aa).

Fe(2+)-binding residues include histidine 97, histidine 99, glutamate 103, and histidine 141. Ni(2+) is bound by residues histidine 97, histidine 99, glutamate 103, and histidine 141.

Belongs to the acireductone dioxygenase (ARD) family. As to quaternary structure, monomer. It depends on Fe(2+) as a cofactor. Requires Ni(2+) as cofactor.

It carries out the reaction 1,2-dihydroxy-5-(methylsulfanyl)pent-1-en-3-one + O2 = 3-(methylsulfanyl)propanoate + CO + formate + 2 H(+). The catalysed reaction is 1,2-dihydroxy-5-(methylsulfanyl)pent-1-en-3-one + O2 = 4-methylsulfanyl-2-oxobutanoate + formate + 2 H(+). It participates in amino-acid biosynthesis; L-methionine biosynthesis via salvage pathway; L-methionine from S-methyl-5-thio-alpha-D-ribose 1-phosphate: step 5/6. Its function is as follows. Catalyzes 2 different reactions between oxygen and the acireductone 1,2-dihydroxy-3-keto-5-methylthiopentene (DHK-MTPene) depending upon the metal bound in the active site. Fe-containing acireductone dioxygenase (Fe-ARD) produces formate and 2-keto-4-methylthiobutyrate (KMTB), the alpha-ketoacid precursor of methionine in the methionine recycle pathway. Ni-containing acireductone dioxygenase (Ni-ARD) produces methylthiopropionate, carbon monoxide and formate, and does not lie on the methionine recycle pathway. The chain is Acireductone dioxygenase from Xylella fastidiosa (strain M12).